The sequence spans 748 residues: E3 ubiquitin-protein ligase DTX3L (748 aa).

The residue at position 2 (alanine 2) is an N-acetylalanine. Serine 9 carries the post-translational modification Phosphoserine. 3 disordered regions span residues 94 to 117, 209 to 238, and 528 to 562; these read DLRPRLPSLTQPVETPSSRPPSLT, EQKRKGSEQKRKCAPQKHTPPDVEREPPDQ, and QETPMEISSSDPHGDQQENAALPAPRGTSSSPAAS. Residues 101 to 117 show a composition bias toward polar residues; sequence SLTQPVETPSSRPPSLT. 2 stretches are compositionally biased toward basic and acidic residues: residues 209 to 219 and 227 to 236; these read EQKRKGSEQKR and TPPDVEREPP. Phosphoserine is present on serine 215. Serine 536 bears the Phosphoserine mark. The RING-type zinc-finger motif lies at 569–608; the sequence is CVICMDTISNKHVLPKCKHEFCTSCISKAMLIKPVCPVCL.

It belongs to the Deltex family. In terms of assembly, homodimer and heterodimer. Can heterodimerize with DTX1, enhancing its ubiquitin ligase activity in vitro. Interacts (via N-terminus) with ADP ribosyltransferase PARP9/BAL1 (via PARP catalytic domain) forming a stable complex; the interaction is required to activate PARP9 but is dispensable for DTX3L catalytic activity. Forms a complex with STAT1 and PARP9 independently of IFNB1 or IFNG-mediated STAT1 'Tyr-701' phosphorylation. Found in a complex with PARP9, STAT1 and H2BC9. Found in a complex with E3 ligase ITCH and ESCRT-0 components HGS and STAM. Interacts (via C-terminus) with ITCH; the interaction is increased upon CXCL12 stimulation and inhibits ITCH catalytic activity; the interaction is direct. Interacts with HGS and STAM; the interaction brings together HGS and STAM and promotes their recruitment to early endosomes. Post-translationally, autoubiquitinated.

The protein resides in the cytoplasm. It localises to the nucleus. It is found in the early endosome membrane. The protein localises to the lysosome membrane. The catalysed reaction is S-ubiquitinyl-[E2 ubiquitin-conjugating enzyme]-L-cysteine + [acceptor protein]-L-lysine = [E2 ubiquitin-conjugating enzyme]-L-cysteine + N(6)-ubiquitinyl-[acceptor protein]-L-lysine.. Its pathway is protein modification; protein ubiquitination. Binding to PARP9 enhances DTX3L catalytic activity. E3 ubiquitin-protein ligase which, in association with ADP-ribosyltransferase PARP9, plays a role in DNA damage repair and in interferon-mediated antiviral responses. Monoubiquitinates several histones, including histone H2A, H2B, H3 and H4. In response to DNA damage, mediates monoubiquitination of 'Lys-91' of histone H4 (H4K91ub1). The exact role of H4K91ub1 in DNA damage response is still unclear but it may function as a licensing signal for additional histone H4 post-translational modifications such as H4 'Lys-20' methylation (H4K20me). PARP1-dependent PARP9-DTX3L-mediated ubiquitination promotes the rapid and specific recruitment of 53BP1/TP53BP1, UIMC1/RAP80, and BRCA1 to DNA damage sites. By monoubiquitinating histone H2B H2BC9/H2BJ and thereby promoting chromatin remodeling, positively regulates STAT1-dependent interferon-stimulated gene transcription and thus STAT1-mediated control of viral replication. Independently of its catalytic activity, promotes the sorting of chemokine receptor CXCR4 from early endosome to lysosome following CXCL12 stimulation by reducing E3 ligase ITCH activity and thus ITCH-mediated ubiquitination of endosomal sorting complex required for transport ESCRT-0 components HGS and STAM. In addition, required for the recruitment of HGS and STAM to early endosomes. The polypeptide is E3 ubiquitin-protein ligase DTX3L (Dtx3l) (Mus musculus (Mouse)).